A 99-amino-acid polypeptide reads, in one-letter code: Aspartyl/glutamyl-tRNA(Asn/Gln) amidotransferase subunit C (99 aa).

The protein belongs to the GatC family. In terms of assembly, heterotrimer of A, B and C subunits.

The catalysed reaction is L-glutamyl-tRNA(Gln) + L-glutamine + ATP + H2O = L-glutaminyl-tRNA(Gln) + L-glutamate + ADP + phosphate + H(+). It carries out the reaction L-aspartyl-tRNA(Asn) + L-glutamine + ATP + H2O = L-asparaginyl-tRNA(Asn) + L-glutamate + ADP + phosphate + 2 H(+). Its function is as follows. Allows the formation of correctly charged Asn-tRNA(Asn) or Gln-tRNA(Gln) through the transamidation of misacylated Asp-tRNA(Asn) or Glu-tRNA(Gln) in organisms which lack either or both of asparaginyl-tRNA or glutaminyl-tRNA synthetases. The reaction takes place in the presence of glutamine and ATP through an activated phospho-Asp-tRNA(Asn) or phospho-Glu-tRNA(Gln). The polypeptide is Aspartyl/glutamyl-tRNA(Asn/Gln) amidotransferase subunit C (Paraburkholderia xenovorans (strain LB400)).